The chain runs to 315 residues: Calumenin-B (315 aa).

The N-terminal stretch at 1–19 (MEQWPLLFVVALCILQSSS) is a signal peptide. Residues 22–39 (MEKKDRVHHDAPLSNKDH) show a composition bias toward basic and acidic residues. A disordered region spans residues 22 to 42 (MEKKDRVHHDAPLSNKDHDDE). EF-hand domains are found at residues 68–103 (ESKE…AQRR), 104–139 (WIYE…YILD), 151–186 (QMMT…EEFD), 188–223 (MKDI…QNGD), 229–264 (WVKT…ADYD), and 265–300 (HAEA…FVGS). Positions 81, 83, 85, 92, 117, 119, 121, 128, 164, 166, 168, 170, 175, 201, 203, 205, 212, 242, 244, 246, 248, 253, 278, 280, 282, 284, and 289 each coordinate Ca(2+). Positions 312 to 315 (HDEF) match the Prevents secretion from ER motif.

Belongs to the CREC family. As to quaternary structure, interacts with ggcx.

It is found in the endoplasmic reticulum membrane. The protein localises to the golgi apparatus. It localises to the secreted. Its subcellular location is the melanosome. The protein resides in the sarcoplasmic reticulum lumen. Its function is as follows. Involved in regulation of vitamin K-dependent carboxylation of multiple N-terminal glutamate residues. Seems to inhibit gamma-carboxylase ggcx. Binds 7 calcium ions with a low affinity. The sequence is that of Calumenin-B (calub) from Danio rerio (Zebrafish).